The following is a 396-amino-acid chain: Acetate kinase (396 aa).

A Mg(2+)-binding site is contributed by asparagine 8. Lysine 15 serves as a coordination point for ATP. Substrate is bound at residue arginine 89. Aspartate 146 (proton donor/acceptor) is an active-site residue. Residues 206 to 210 (HIGNG), 283 to 285 (DMR), and 331 to 335 (GVGEN) contribute to the ATP site. Glutamate 383 is a Mg(2+) binding site.

It belongs to the acetokinase family. As to quaternary structure, homodimer. The cofactor is Mg(2+). Mn(2+) is required as a cofactor.

Its subcellular location is the cytoplasm. The catalysed reaction is acetate + ATP = acetyl phosphate + ADP. It participates in metabolic intermediate biosynthesis; acetyl-CoA biosynthesis; acetyl-CoA from acetate: step 1/2. Functionally, catalyzes the formation of acetyl phosphate from acetate and ATP. Can also catalyze the reverse reaction. This Streptococcus pneumoniae (strain ATCC 700669 / Spain 23F-1) protein is Acetate kinase.